Consider the following 319-residue polypeptide: Olfactory receptor 51F1 (319 aa).

The Extracellular segment spans residues 1-37; that stretch reads MLQNQDTMEILSNSTSKFPTFLLTGIPGLESAHVWIS. A helical transmembrane segment spans residues 38-58; the sequence is IPFCCFYAIALSGNSVILFVI. Over 59 to 75 the chain is Cytoplasmic; the sequence is ITQQSLHEPMYYFLFRL. A helical transmembrane segment spans residues 76-96; sequence SATDLGLTVSSLSTTLGILWF. Topologically, residues 97 to 106 are extracellular; it reads EAREISLYSC. A disulfide bond links Cys106 and Cys188. A helical membrane pass occupies residues 107-127; the sequence is IVQMFFLHGFTFMESGVLVAT. At 128 to 149 the chain is on the cytoplasmic side; it reads AFDRYVAICDPLRYTTILTNSR. The chain crosses the membrane as a helical span at residues 150–170; it reads IIQMGLLMITRAIVLILPLLL. The Extracellular segment spans residues 171 to 211; that stretch reads LLKPLYFCRMNALSHSYCYHPDVIQLACSDIRANSICGLID. A helical transmembrane segment spans residues 212–232; sequence LILTTGIDTPCIVLSYILIIH. At 233 to 249 the chain is on the cytoplasmic side; the sequence is SVLRIASPEEWHKVFST. Residues 250–270 traverse the membrane as a helical segment; sequence CVSHVGAVAFFYIHMLSLSLV. Topologically, residues 271–279 are extracellular; that stretch reads YRYGRSAPR. A helical membrane pass occupies residues 280–300; that stretch reads VVHSVMANVYLLLPPVLNPII. Topologically, residues 301–319 are cytoplasmic; the sequence is DSVKTKQIRKAMLSLLLTK.

The protein belongs to the G-protein coupled receptor 1 family.

The protein resides in the cell membrane. In terms of biological role, odorant receptor. This is Olfactory receptor 51F1 (OR51F1) from Homo sapiens (Human).